The chain runs to 217 residues: 3,4-dihydroxy-2-butanone 4-phosphate synthase (217 aa).

Residues 37 to 38 (RE), D42, 150 to 154 (RGGHT), and E174 each bind D-ribulose 5-phosphate. E38 contacts Mg(2+). Position 153 (H153) interacts with Mg(2+).

This sequence belongs to the DHBP synthase family. In terms of assembly, homodimer. It depends on Mg(2+) as a cofactor. Requires Mn(2+) as cofactor.

It catalyses the reaction D-ribulose 5-phosphate = (2S)-2-hydroxy-3-oxobutyl phosphate + formate + H(+). It participates in cofactor biosynthesis; riboflavin biosynthesis; 2-hydroxy-3-oxobutyl phosphate from D-ribulose 5-phosphate: step 1/1. Functionally, catalyzes the conversion of D-ribulose 5-phosphate to formate and 3,4-dihydroxy-2-butanone 4-phosphate. This chain is 3,4-dihydroxy-2-butanone 4-phosphate synthase, found in Salmonella heidelberg (strain SL476).